A 320-amino-acid polypeptide reads, in one-letter code: NAD kinase (320 aa).

Aspartate 96 (proton acceptor) is an active-site residue. NAD(+) contacts are provided by residues 96–97 (DG), arginine 101, 170–171 (NE), aspartate 200, and 211–216 (TAYAFS).

This sequence belongs to the NAD kinase family. A divalent metal cation is required as a cofactor.

The protein resides in the cytoplasm. The catalysed reaction is NAD(+) + ATP = ADP + NADP(+) + H(+). Involved in the regulation of the intracellular balance of NAD and NADP, and is a key enzyme in the biosynthesis of NADP. Catalyzes specifically the phosphorylation on 2'-hydroxyl of the adenosine moiety of NAD to yield NADP. The sequence is that of NAD kinase from Rhodococcus jostii (strain RHA1).